The primary structure comprises 223 residues: MFGPRHFSVLKTTGSLVSSTFSSSLKPTATFSCARAFSQTSSIMSKVFFDLEWEGPVLGPNNKPTSEIKAQSGRINFTLYDDVVPKTARNFKELCTGQNGFGYKGSSFHRIIPEFMLQGGDFTRGNGTGGKSIYGEKFADENFAKKHVRPGLLSMANAGPNTNGSQFFVTTVPTSWLDGRHVVFGEVADDESMKVVKALEATGSSSGAIRYSKKPTIVDCGAL.

The transit peptide at 1-44 (MFGPRHFSVLKTTGSLVSSTFSSSLKPTATFSCARAFSQTSSIM) directs the protein to the mitochondrion. One can recognise a PPIase cyclophilin-type domain in the interval 62–222 (NKPTSEIKAQ…KKPTIVDCGA (161 aa)).

Belongs to the cyclophilin-type PPIase family.

Its subcellular location is the mitochondrion. It localises to the cytoplasm. The enzyme catalyses [protein]-peptidylproline (omega=180) = [protein]-peptidylproline (omega=0). Its activity is regulated as follows. Binds cyclosporin A (CsA). CsA mediates some of its effects via an inhibitory action on PPIase. Its function is as follows. PPIases accelerate the folding of proteins. It catalyzes the cis-trans isomerization of proline imidic peptide bonds in oligopeptides. This chain is Peptidyl-prolyl cis-trans isomerase, mitochondrial (csr-1), found in Neurospora crassa (strain ATCC 24698 / 74-OR23-1A / CBS 708.71 / DSM 1257 / FGSC 987).